The sequence spans 278 residues: Rhomboid protease GlpG (278 aa).

Helical transmembrane passes span A94 to I114, A143 to G163, L175 to G195, A196 to G216, I224 to G241, and I245 to F267. The Nucleophile role is filled by S202. The active site involves H255.

It belongs to the peptidase S54 family.

It is found in the cell inner membrane. The catalysed reaction is Cleaves type-1 transmembrane domains using a catalytic dyad composed of serine and histidine that are contributed by different transmembrane domains.. Functionally, rhomboid-type serine protease that catalyzes intramembrane proteolysis. The sequence is that of Rhomboid protease GlpG from Yersinia pseudotuberculosis serotype I (strain IP32953).